The sequence spans 62 residues: Large ribosomal subunit protein eL37 (62 aa).

Zn(2+)-binding residues include C20, C23, C35, and C38. A C4-type zinc finger spans residues 20–38 (CRRCGRRSYNVAKGYCAAC).

The protein belongs to the eukaryotic ribosomal protein eL37 family. Requires Zn(2+) as cofactor.

Its function is as follows. Binds to the 23S rRNA. This chain is Large ribosomal subunit protein eL37 (rpl37e), found in Aeropyrum pernix (strain ATCC 700893 / DSM 11879 / JCM 9820 / NBRC 100138 / K1).